A 440-amino-acid chain; its full sequence is uncharacterized protein (440 aa).

Disordered stretches follow at residues 49–81 and 162–295; these read CPPA…EPSL and LPKP…CASE. The span at 55-80 shows a compositional bias: polar residues; it reads HGHSSLRTNLNSSPPRCPQNPGTEPS. Over residues 249 to 266 the composition is skewed to basic and acidic residues; sequence YREELSNTKSRFSEDKGS. Positions 274–284 are enriched in low complexity; that stretch reads SSNSSEPGLPG.

This sequence belongs to the tymoviridae protein p69 family.

This is an uncharacterized protein from Erysimum latent virus (ELV).